Reading from the N-terminus, the 449-residue chain is 23S rRNA (uracil(1939)-C(5))-methyltransferase RlmD (449 aa).

Residues 1–66 form the TRAM domain; that stretch reads MGRSRHHNKL…AKFDEAKVVE (66 aa). Residues Cys-79, Cys-85, Cys-88, and Cys-169 each coordinate [4Fe-4S] cluster. S-adenosyl-L-methionine is bound by residues Gln-280, Phe-309, Asn-314, Glu-330, Asn-357, and Asp-379. Cys-405 acts as the Nucleophile in catalysis.

Belongs to the class I-like SAM-binding methyltransferase superfamily. RNA M5U methyltransferase family. RlmD subfamily.

The catalysed reaction is uridine(1939) in 23S rRNA + S-adenosyl-L-methionine = 5-methyluridine(1939) in 23S rRNA + S-adenosyl-L-homocysteine + H(+). In terms of biological role, catalyzes the formation of 5-methyl-uridine at position 1939 (m5U1939) in 23S rRNA. The sequence is that of 23S rRNA (uracil(1939)-C(5))-methyltransferase RlmD from Francisella tularensis subsp. novicida (strain U112).